Consider the following 197-residue polypeptide: Imidazoleglycerol-phosphate dehydratase (197 aa).

The protein belongs to the imidazoleglycerol-phosphate dehydratase family.

The protein resides in the cytoplasm. The catalysed reaction is D-erythro-1-(imidazol-4-yl)glycerol 3-phosphate = 3-(imidazol-4-yl)-2-oxopropyl phosphate + H2O. It participates in amino-acid biosynthesis; L-histidine biosynthesis; L-histidine from 5-phospho-alpha-D-ribose 1-diphosphate: step 6/9. This is Imidazoleglycerol-phosphate dehydratase from Pseudomonas fluorescens (strain ATCC BAA-477 / NRRL B-23932 / Pf-5).